The primary structure comprises 416 residues: Enolase (416 aa).

Residue glutamine 156 coordinates (2R)-2-phosphoglycerate. Glutamate 200 functions as the Proton donor in the catalytic mechanism. Mg(2+)-binding residues include aspartate 236, glutamate 281, and aspartate 308. Lysine 333, arginine 362, serine 363, and lysine 384 together coordinate (2R)-2-phosphoglycerate. The active-site Proton acceptor is lysine 333.

It belongs to the enolase family. It depends on Mg(2+) as a cofactor.

The protein resides in the cytoplasm. Its subcellular location is the secreted. The protein localises to the cell surface. The catalysed reaction is (2R)-2-phosphoglycerate = phosphoenolpyruvate + H2O. Its pathway is carbohydrate degradation; glycolysis; pyruvate from D-glyceraldehyde 3-phosphate: step 4/5. Its function is as follows. Catalyzes the reversible conversion of 2-phosphoglycerate (2-PG) into phosphoenolpyruvate (PEP). It is essential for the degradation of carbohydrates via glycolysis. This is Enolase from Methanothermobacter thermautotrophicus (strain ATCC 29096 / DSM 1053 / JCM 10044 / NBRC 100330 / Delta H) (Methanobacterium thermoautotrophicum).